The primary structure comprises 212 residues: Ribosomal RNA small subunit methyltransferase G (212 aa).

S-adenosyl-L-methionine is bound by residues Gly80, Leu85, 131 to 132, and Arg146; that span reads AE.

This sequence belongs to the methyltransferase superfamily. RNA methyltransferase RsmG family.

The protein resides in the cytoplasm. The catalysed reaction is guanosine(527) in 16S rRNA + S-adenosyl-L-methionine = N(7)-methylguanosine(527) in 16S rRNA + S-adenosyl-L-homocysteine. Functionally, specifically methylates the N7 position of guanine in position 527 of 16S rRNA. The protein is Ribosomal RNA small subunit methyltransferase G of Xanthomonas oryzae pv. oryzae (strain MAFF 311018).